The chain runs to 418 residues: Acyl-coenzyme A amino acid N-acyltransferase 2 (418 aa).

Active-site charge relay system residues include Ser-234, Asp-327, and His-361. The short motif at 416-418 is the Microbody targeting signal element; sequence GKL.

This sequence belongs to the C/M/P thioester hydrolase family.

Its subcellular location is the peroxisome. Functionally, acyltransferase which efficiently conjugates very long-chain and long-chain fatty acids to taurine. Shows no conjugation activity in the presence of glycine. In Rattus norvegicus (Rat), this protein is Acyl-coenzyme A amino acid N-acyltransferase 2.